The chain runs to 409 residues: Bone morphogenetic protein 4 (409 aa).

A signal peptide spans 1–19 (MIPGNRMLMVVLLCQVLLG). A propeptide spanning residues 20–293 (GASHASLIPE…ALTRRRRAKR (274 aa)) is cleaved from the precursor. Phosphoserine is present on Ser91. Residues Asn144 and Asn209 are each glycosylated (N-linked (GlcNAc...) asparagine). The interval 284-308 (ALTRRRRAKRSPKHHPQRARKKNKN) is disordered. 3 disulfide bridges follow: Cys309–Cys374, Cys338–Cys406, and Cys342–Cys408. Residues Asn351 and Asn366 are each glycosylated (N-linked (GlcNAc...) asparagine).

It belongs to the TGF-beta family. Homodimer; disulfide-linked. Interacts with GREM2. Part of a complex consisting of TWSG1 and CHRD. Interacts with the serine proteases, HTRA1 and HTRA3; the interaction with either inhibits BMP4-mediated signaling. The HTRA protease activity is required for this inhibition. Interacts with SOSTDC1. Interacts with FBN1 (via N-terminal domain) and FBN2. Interacts with type I receptor BMPR1A. Interacts with type II receptor BMPR2. Interacts with FSTL1; this interaction inhibits the activation of the BMP4/Smad1/5/8 signaling pathway. Interacts with TGFBR3.

It is found in the secreted. The protein resides in the extracellular space. It localises to the extracellular matrix. Growth factor of the TGF-beta superfamily that plays essential roles in many developmental processes, including neurogenesis, vascular development, angiogenesis and osteogenesis. Acts in concert with PTHLH/PTHRP to stimulate ductal outgrowth during embryonic mammary development and to inhibit hair follicle induction. Initiates the canonical BMP signaling cascade by associating with type I receptor BMPR1A and type II receptor BMPR2. Once all three components are bound together in a complex at the cell surface, BMPR2 phosphorylates and activates BMPR1A. In turn, BMPR1A propagates signal by phosphorylating SMAD1/5/8 that travel to the nucleus and act as activators and repressors of transcription of target genes. Positively regulates the expression of odontogenic development regulator MSX1 via inducing the IPO7-mediated import of SMAD1 to the nucleus. Required for MSX1-mediated mesenchymal molar tooth bud development beyond the bud stage, via promoting Wnt signaling. Acts as a positive regulator of odontoblast differentiation during mesenchymal tooth germ formation, expression is repressed during the bell stage by MSX1-mediated inhibition of CTNNB1 signaling. Able to induce its own expression in dental mesenchymal cells and also in the neighboring dental epithelial cells via an MSX1-mediated pathway. Can also signal through non-canonical BMP pathways such as ERK/MAP kinase, PI3K/Akt, or SRC cascades. For example, induces SRC phosphorylation which, in turn, activates VEGFR2, leading to an angiogenic response. This is Bone morphogenetic protein 4 from Suncus murinus (Asian house shrew).